A 283-amino-acid chain; its full sequence is Cyclin-C (283 aa).

The region spanning 46–144 (NVIQALGEHL…ILECEFYLLE (99 aa)) is the Cyclin N-terminal domain. The interval 252–283 (TILSKMPKPKPPPNSEGEQGPNGSQNSSYSQS) is disordered. Positions 272 to 283 (PNGSQNSSYSQS) are enriched in polar residues.

This sequence belongs to the cyclin family. Cyclin C subfamily. As to quaternary structure, component of the Mediator complex. The cylin/CDK pair formed by CCNC/CDK8 also associates with the large subunit of RNA polymerase II.

It is found in the nucleus. In terms of biological role, component of the Mediator complex, a coactivator involved in regulated gene transcription of nearly all RNA polymerase II-dependent genes. Mediator functions as a bridge to convey information from gene-specific regulatory proteins to the basal RNA polymerase II transcription machinery. Mediator is recruited to promoters by direct interactions with regulatory proteins and serves as a scaffold for the assembly of a functional preinitiation complex with RNA polymerase II and the general transcription factors. Binds to and activates cyclin-dependent kinase CDK8 that phosphorylates the CTD (C-terminal domain) of the large subunit of RNA polymerase II (RNAp II), which may inhibit the formation of a transcription initiation complex. This is Cyclin-C (CCNC) from Gallus gallus (Chicken).